We begin with the raw amino-acid sequence, 271 residues long: 3-methyl-2-oxobutanoate hydroxymethyltransferase (271 aa).

Positions 53 and 92 each coordinate Mg(2+). 3-methyl-2-oxobutanoate-binding positions include 53–54 (DS), Asp92, and Lys120. Glu122 provides a ligand contact to Mg(2+). Glu189 acts as the Proton acceptor in catalysis.

It belongs to the PanB family. As to quaternary structure, homodecamer; pentamer of dimers. It depends on Mg(2+) as a cofactor.

It is found in the cytoplasm. It catalyses the reaction 3-methyl-2-oxobutanoate + (6R)-5,10-methylene-5,6,7,8-tetrahydrofolate + H2O = 2-dehydropantoate + (6S)-5,6,7,8-tetrahydrofolate. The protein operates within cofactor biosynthesis; (R)-pantothenate biosynthesis; (R)-pantoate from 3-methyl-2-oxobutanoate: step 1/2. Catalyzes the reversible reaction in which hydroxymethyl group from 5,10-methylenetetrahydrofolate is transferred onto alpha-ketoisovalerate to form ketopantoate. This is 3-methyl-2-oxobutanoate hydroxymethyltransferase from Paraburkholderia phymatum (strain DSM 17167 / CIP 108236 / LMG 21445 / STM815) (Burkholderia phymatum).